We begin with the raw amino-acid sequence, 432 residues long: 7-dehydrocholesterol reductase (432 aa).

Transmembrane regions (helical) follow at residues tyrosine 12–valine 34, leucine 64–glycine 86, leucine 107–phenylalanine 126, glycine 136–isoleucine 155, phenylalanine 195–tyrosine 212, methionine 227–tryptophan 249, phenylalanine 261–valine 283, valine 287–tyrosine 309, and serine 371–leucine 393.

Belongs to the ERG4/ERG24 family.

It is found in the endoplasmic reticulum membrane. It catalyses the reaction cholesterol + NADP(+) = 7-dehydrocholesterol + NADPH + H(+). It functions in the pathway lipid metabolism; steroid biosynthesis. Its function is as follows. Production of cholesterol by reduction of C7-C8 double bond of 7-dehydrocholesterol (7-DHC). Lesions in the gene coding for the enzyme cause dwarfism. In Arabidopsis thaliana (Mouse-ear cress), this protein is 7-dehydrocholesterol reductase (DWF5).